Consider the following 436-residue polypeptide: Proline--tRNA ligase (436 aa).

This sequence belongs to the class-II aminoacyl-tRNA synthetase family. ProS type 2 subfamily. In terms of assembly, homodimer.

It is found in the cytoplasm. The enzyme catalyses tRNA(Pro) + L-proline + ATP = L-prolyl-tRNA(Pro) + AMP + diphosphate. Its function is as follows. Catalyzes the attachment of proline to tRNA(Pro) in a two-step reaction: proline is first activated by ATP to form Pro-AMP and then transferred to the acceptor end of tRNA(Pro). This Neorickettsia sennetsu (strain ATCC VR-367 / Miyayama) (Ehrlichia sennetsu) protein is Proline--tRNA ligase.